The chain runs to 495 residues: Cytochrome P450 monooxygenase 64 (495 aa).

The chain crosses the membrane as a helical span at residues Phe-2–Leu-22. N-linked (GlcNAc...) asparagine glycosylation is found at Asn-25 and Asn-198. Cys-428 is a heme binding site.

Belongs to the cytochrome P450 family. The cofactor is heme.

The protein localises to the membrane. The protein operates within secondary metabolite biosynthesis. In terms of biological role, cytochrome P450 monooxygenase that is able to use 4-ethoxybenzoic acid as a substrate for oxidation. The chain is Cytochrome P450 monooxygenase 64 from Postia placenta (strain ATCC 44394 / Madison 698-R) (Brown rot fungus).